The following is a 128-amino-acid chain: Large ribosomal subunit protein bL17 (128 aa).

It belongs to the bacterial ribosomal protein bL17 family. Part of the 50S ribosomal subunit. Contacts protein L32.

This is Large ribosomal subunit protein bL17 from Erwinia tasmaniensis (strain DSM 17950 / CFBP 7177 / CIP 109463 / NCPPB 4357 / Et1/99).